Here is a 745-residue protein sequence, read N- to C-terminus: Phosphoribosylformylglycinamidine synthase subunit PurL (745 aa).

His-47 is a catalytic residue. Residues Tyr-50 and Lys-90 each coordinate ATP. Glu-92 is a Mg(2+) binding site. Substrate is bound by residues 93-96 and Arg-115; that span reads SHNH. His-94 serves as the catalytic Proton acceptor. Asp-116 is a Mg(2+) binding site. Gln-240 lines the substrate pocket. Asp-268 serves as a coordination point for Mg(2+). Substrate is bound at residue 312 to 314; sequence ESQ. Positions 501 and 538 each coordinate ATP. A Mg(2+)-binding site is contributed by Asn-539. Position 541 (Ser-541) interacts with substrate.

It belongs to the FGAMS family. In terms of assembly, monomer. Part of the FGAM synthase complex composed of 1 PurL, 1 PurQ and 2 PurS subunits.

It localises to the cytoplasm. It carries out the reaction N(2)-formyl-N(1)-(5-phospho-beta-D-ribosyl)glycinamide + L-glutamine + ATP + H2O = 2-formamido-N(1)-(5-O-phospho-beta-D-ribosyl)acetamidine + L-glutamate + ADP + phosphate + H(+). Its pathway is purine metabolism; IMP biosynthesis via de novo pathway; 5-amino-1-(5-phospho-D-ribosyl)imidazole from N(2)-formyl-N(1)-(5-phospho-D-ribosyl)glycinamide: step 1/2. Its function is as follows. Part of the phosphoribosylformylglycinamidine synthase complex involved in the purines biosynthetic pathway. Catalyzes the ATP-dependent conversion of formylglycinamide ribonucleotide (FGAR) and glutamine to yield formylglycinamidine ribonucleotide (FGAM) and glutamate. The FGAM synthase complex is composed of three subunits. PurQ produces an ammonia molecule by converting glutamine to glutamate. PurL transfers the ammonia molecule to FGAR to form FGAM in an ATP-dependent manner. PurS interacts with PurQ and PurL and is thought to assist in the transfer of the ammonia molecule from PurQ to PurL. This chain is Phosphoribosylformylglycinamidine synthase subunit PurL, found in Leptospira interrogans serogroup Icterohaemorrhagiae serovar copenhageni (strain Fiocruz L1-130).